A 449-amino-acid polypeptide reads, in one-letter code: MLSSQTSSIFTVSRLNQTVRLLLEQEMGQVWISGEISNFTQPASGHWYFTLKDDTAQVRCAMFRNSNRRVTFRPQHGQQVLVRANITLYEPRGDYQIIAESMQPAGEGLLQQKYEQLKAKLHAEGLFDQQHKQPLPSPAHCVGVITSKTGAALHDILHVLKRRDPSLPVIIYPTAVQGDDAPGQIVRAIELANTRGECDVLIVGRGGGSLEDLWSFNDERVARAIFASRIPVVSAVGHETDVTIADFVADLRAPTPSAAAEIVSRNQQELLRQIQSAQQRLGMAMDYYLANRSRRFTQIFHRLQQQHPQLRLARQQTALERLRQRMGFALEARIKQATQRQQRVSQRLSQQNPQPRIHRVQSRIQQLEYRLTENIRSRLSEQRERFGNAVTHLEAVSPLATLARGYTVSTTTDGKVLKKIKQVKAGDIMTTRLEDGWLESEVKSVTPGT.

Belongs to the XseA family. In terms of assembly, heterooligomer composed of large and small subunits.

Its subcellular location is the cytoplasm. The enzyme catalyses Exonucleolytic cleavage in either 5'- to 3'- or 3'- to 5'-direction to yield nucleoside 5'-phosphates.. Bidirectionally degrades single-stranded DNA into large acid-insoluble oligonucleotides, which are then degraded further into small acid-soluble oligonucleotides. The polypeptide is Exodeoxyribonuclease 7 large subunit (Salmonella typhi).